Consider the following 124-residue polypeptide: Small ribosomal subunit protein uS12 (124 aa).

Residue Asp89 is modified to 3-methylthioaspartic acid.

This sequence belongs to the universal ribosomal protein uS12 family. As to quaternary structure, part of the 30S ribosomal subunit. Contacts proteins S8 and S17. May interact with IF1 in the 30S initiation complex.

With S4 and S5 plays an important role in translational accuracy. In terms of biological role, interacts with and stabilizes bases of the 16S rRNA that are involved in tRNA selection in the A site and with the mRNA backbone. Located at the interface of the 30S and 50S subunits, it traverses the body of the 30S subunit contacting proteins on the other side and probably holding the rRNA structure together. The combined cluster of proteins S8, S12 and S17 appears to hold together the shoulder and platform of the 30S subunit. The chain is Small ribosomal subunit protein uS12 from Shewanella oneidensis (strain ATCC 700550 / JCM 31522 / CIP 106686 / LMG 19005 / NCIMB 14063 / MR-1).